Here is a 364-residue protein sequence, read N- to C-terminus: O-methyltransferase ZRP4 (364 aa).

Residues Gly-208, Asp-231, Asp-251, Met-252, and Lys-265 each coordinate S-adenosyl-L-methionine. His-269 acts as the Proton acceptor in catalysis.

This sequence belongs to the class I-like SAM-binding methyltransferase superfamily. Cation-independent O-methyltransferase family. COMT subfamily. As to quaternary structure, homodimer. In terms of tissue distribution, accumulates preferentially in the roots and is located predominantly in the region of the endodermis, low levels are seen in the leaves, stems and other shoot organs.

May be involved in the O-methylation of suberin phenylpropanoid precursors. The chain is O-methyltransferase ZRP4 (ZRP4) from Zea mays (Maize).